A 336-amino-acid polypeptide reads, in one-letter code: Phosphate acyltransferase (336 aa).

This sequence belongs to the PlsX family. As to quaternary structure, homodimer. Probably interacts with PlsY.

It localises to the cytoplasm. The enzyme catalyses a fatty acyl-[ACP] + phosphate = an acyl phosphate + holo-[ACP]. The protein operates within lipid metabolism; phospholipid metabolism. Its function is as follows. Catalyzes the reversible formation of acyl-phosphate (acyl-PO(4)) from acyl-[acyl-carrier-protein] (acyl-ACP). This enzyme utilizes acyl-ACP as fatty acyl donor, but not acyl-CoA. This chain is Phosphate acyltransferase, found in Pseudomonas paraeruginosa (strain DSM 24068 / PA7) (Pseudomonas aeruginosa (strain PA7)).